The sequence spans 343 residues: Protein RecA (343 aa).

64-71 (GPESSGKT) provides a ligand contact to ATP.

The protein belongs to the RecA family.

Its subcellular location is the cytoplasm. Can catalyze the hydrolysis of ATP in the presence of single-stranded DNA, the ATP-dependent uptake of single-stranded DNA by duplex DNA, and the ATP-dependent hybridization of homologous single-stranded DNAs. It interacts with LexA causing its activation and leading to its autocatalytic cleavage. The chain is Protein RecA from Bacillus cereus (strain ATCC 14579 / DSM 31 / CCUG 7414 / JCM 2152 / NBRC 15305 / NCIMB 9373 / NCTC 2599 / NRRL B-3711).